Reading from the N-terminus, the 456-residue chain is D-glycerate 3-kinase, chloroplastic (456 aa).

Residues 1–63 (MAVAISGSSL…KFNDHVVNPS (63 aa)) constitute a chloroplast transit peptide. Position 215–222 (215–222 (APQGCGKT)) interacts with ATP.

This sequence belongs to the GLYK kinase family.

The protein localises to the plastid. Its subcellular location is the chloroplast. It localises to the cytoplasm. The catalysed reaction is (R)-glycerate + ATP = (2R)-3-phosphoglycerate + ADP + H(+). It participates in photosynthesis; photorespiration; 3-phospho-D-glycerate from glycine: step 4/4. Its function is as follows. Catalyzes the concluding reaction of the photorespiratory C2 cycle, an indispensable ancillary metabolic pathway to the photosynthetic C3 cycle that enables land plants to grow in an oxygen-containing atmosphere. Cytoplasmic D-glycerate 3-kinase that constitutes a photorespiratory bypass that alleviates fluctuating light-induced photoinhibition. This is D-glycerate 3-kinase, chloroplastic from Arabidopsis thaliana (Mouse-ear cress).